The chain runs to 193 residues: Large ribosomal subunit protein eL18 (193 aa).

A disordered region spans residues 158 to 193 (HFGAAGVPGSHAKPFTSNRGKERQRSSARRRAFRHK). Positions 183–193 (SSARRRAFRHK) are enriched in basic residues.

This sequence belongs to the eukaryotic ribosomal protein eL18 family.

It localises to the cytoplasm. The polypeptide is Large ribosomal subunit protein eL18 (RPL18) (Trypanosoma cruzi (strain CL Brener)).